Here is an 86-residue protein sequence, read N- to C-terminus: MPGTSDKTVYWRNKPEDRNPGEVLQKVYAALKEKGYSPIDQIVGYLLSGDPTYITSHMGARNLIRRIERDELLEELVRSYLEKLEE.

It belongs to the UPF0297 family.

This is UPF0297 protein STH1998 from Symbiobacterium thermophilum (strain DSM 24528 / JCM 14929 / IAM 14863 / T).